A 110-amino-acid chain; its full sequence is Large ribosomal subunit protein uL22 (110 aa).

It belongs to the universal ribosomal protein uL22 family. As to quaternary structure, part of the 50S ribosomal subunit.

In terms of biological role, this protein binds specifically to 23S rRNA; its binding is stimulated by other ribosomal proteins, e.g. L4, L17, and L20. It is important during the early stages of 50S assembly. It makes multiple contacts with different domains of the 23S rRNA in the assembled 50S subunit and ribosome. The globular domain of the protein is located near the polypeptide exit tunnel on the outside of the subunit, while an extended beta-hairpin is found that lines the wall of the exit tunnel in the center of the 70S ribosome. The protein is Large ribosomal subunit protein uL22 of Citrobacter koseri (strain ATCC BAA-895 / CDC 4225-83 / SGSC4696).